The primary structure comprises 634 residues: tRNA uridine 5-carboxymethylaminomethyl modification enzyme MnmG (634 aa).

Residue 14–19 (GGGHAG) coordinates FAD. 279–293 (GPRYCPSIEDKVVRF) lines the NAD(+) pocket.

It belongs to the MnmG family. Homodimer. Heterotetramer of two MnmE and two MnmG subunits. FAD serves as cofactor.

The protein resides in the cytoplasm. NAD-binding protein involved in the addition of a carboxymethylaminomethyl (cmnm) group at the wobble position (U34) of certain tRNAs, forming tRNA-cmnm(5)s(2)U34. The protein is tRNA uridine 5-carboxymethylaminomethyl modification enzyme MnmG of Xanthomonas oryzae pv. oryzae (strain KACC10331 / KXO85).